We begin with the raw amino-acid sequence, 55 residues long: Large ribosomal subunit protein bL33 (55 aa).

This sequence belongs to the bacterial ribosomal protein bL33 family.

This chain is Large ribosomal subunit protein bL33, found in Polaromonas sp. (strain JS666 / ATCC BAA-500).